We begin with the raw amino-acid sequence, 177 residues long: DNA repair protein RAD33 (177 aa).

S2 bears the N-acetylserine mark. A Glycyl lysine isopeptide (Lys-Gly) (interchain with G-Cter in ubiquitin) cross-link involves residue K19.

Its subcellular location is the nucleus. In terms of biological role, involved in nucleotide excision repair (NER) of damaged DNA. Required for the repair of RNA polymerase I-transcribed rDNA and RNA polymerase II-transcribed DNA regions. May have a role in stabilizing the DNA repair proteins RAD4 and RAD34. In Saccharomyces cerevisiae (strain ATCC 204508 / S288c) (Baker's yeast), this protein is DNA repair protein RAD33 (RAD33).